The primary structure comprises 205 residues: Holliday junction branch migration complex subunit RuvA (205 aa).

Residues 1–65 are domain I; that stretch reads MIGRLRGAVA…SAGLRLYGFL (65 aa). The interval 66–144 is domain II; that stretch reads TREDRRAFVL…TDGPVLMSAP (79 aa). Residues 145–153 are flexible linker; that stretch reads TSSAPSAPA. The domain III stretch occupies residues 153-205; that stretch reads AKPAPTGDAVAALMGLGVAEVNARRVVEAAAAELGEEATVQALIKAGLKELGR.

It belongs to the RuvA family. As to quaternary structure, homotetramer. Forms an RuvA(8)-RuvB(12)-Holliday junction (HJ) complex. HJ DNA is sandwiched between 2 RuvA tetramers; dsDNA enters through RuvA and exits via RuvB. An RuvB hexamer assembles on each DNA strand where it exits the tetramer. Each RuvB hexamer is contacted by two RuvA subunits (via domain III) on 2 adjacent RuvB subunits; this complex drives branch migration. In the full resolvosome a probable DNA-RuvA(4)-RuvB(12)-RuvC(2) complex forms which resolves the HJ.

The protein resides in the cytoplasm. In terms of biological role, the RuvA-RuvB-RuvC complex processes Holliday junction (HJ) DNA during genetic recombination and DNA repair, while the RuvA-RuvB complex plays an important role in the rescue of blocked DNA replication forks via replication fork reversal (RFR). RuvA specifically binds to HJ cruciform DNA, conferring on it an open structure. The RuvB hexamer acts as an ATP-dependent pump, pulling dsDNA into and through the RuvAB complex. HJ branch migration allows RuvC to scan DNA until it finds its consensus sequence, where it cleaves and resolves the cruciform DNA. This Caulobacter vibrioides (strain ATCC 19089 / CIP 103742 / CB 15) (Caulobacter crescentus) protein is Holliday junction branch migration complex subunit RuvA.